A 314-amino-acid polypeptide reads, in one-letter code: Olfactory receptor 1468 (314 aa).

Over 1–25 (MTEENQTVISQFLLLGLPIPSEHQH) the chain is Extracellular. N-linked (GlcNAc...) asparagine glycosylation occurs at Asn-5. The helical transmembrane segment at 26–49 (VFYALFLSMYLTTVLGNLIIIILI) threads the bilayer. Residues 50 to 57 (HLDSHLHT) are Cytoplasmic-facing. A helical transmembrane segment spans residues 58 to 79 (PMYLFLSNLSFSDLCFSSVTMP). The Extracellular segment spans residues 80–100 (KLLQNMQSQVPSIPFAGCLTQ). A disulfide bridge connects residues Cys-97 and Cys-189. A helical transmembrane segment spans residues 101–120 (LYFYLYFADLESFLLVAMAY). Topologically, residues 121-139 (DRYVAICFPLHYMSIMSPK) are cytoplasmic. Residues 140–158 (LCVSLVVLSWVLTTFHAML) form a helical membrane-spanning segment. At 159–196 (HTLLMARLSFCADNMIPHFFCDISPLLKLSCSDTHVNE) the chain is on the extracellular side. Residues 197–219 (LVIFVMGGLVIVIPFVLIIVSYA) form a helical membrane-spanning segment. Topologically, residues 220–236 (RVVASILKVPSVRGIHK) are cytoplasmic. A helical membrane pass occupies residues 237 to 260 (IFSTCGSHLSVVSLFYGTIIGLYL). Residues 261–272 (CPSANNSTVKET) lie on the Extracellular side of the membrane. The helical transmembrane segment at 273–292 (VMAMMYTVVTPMLNPFIYSL) threads the bilayer. Residues 293-314 (RNRDMKEALIRVLCKKKITFCL) lie on the Cytoplasmic side of the membrane.

This sequence belongs to the G-protein coupled receptor 1 family. In terms of tissue distribution, olfactory epithelium.

Its subcellular location is the cell membrane. Odorant receptor. This Rattus norvegicus (Rat) protein is Olfactory receptor 1468 (Olr1468).